Consider the following 305-residue polypeptide: Cbb3-type cytochrome c oxidase subunit CcoP2 (305 aa).

2 consecutive transmembrane segments (helical) span residues 4 to 24 (FWSW…VWLL) and 57 to 77 (WWFM…VLYP). 2 consecutive Cytochrome c domains span residues 130–209 (QALK…RSLS) and 219–300 (VDIE…YSLS). Cysteine 143, cysteine 146, histidine 147, methionine 186, cysteine 232, cysteine 235, histidine 236, and methionine 277 together coordinate heme c.

In terms of assembly, component of the cbb3-type cytochrome c oxidase at least composed of CcoN, CcoO, CcoQ and CcoP. Requires heme c as cofactor.

It localises to the cell inner membrane. Its pathway is energy metabolism; oxidative phosphorylation. Functionally, C-type cytochrome. Part of the cbb3-type cytochrome c oxidase complex. CcoP subunit is required for transferring electrons from donor cytochrome c via its heme groups to CcoO subunit. From there, electrons are shuttled to the catalytic binuclear center of CcoN subunit where oxygen reduction takes place. The complex also functions as a proton pump. The chain is Cbb3-type cytochrome c oxidase subunit CcoP2 from Stutzerimonas stutzeri (Pseudomonas stutzeri).